Consider the following 477-residue polypeptide: Polyketide synthase-related protein Dhc1 (477 aa).

A Carrier domain is found at 34 to 112 (EKMTVREGEL…AMTHCVFDRA (79 aa)). At Ser-72 the chain carries O-(pantetheine 4'-phosphoryl)serine. A ketoreductase (KR) domain region spans residues 161-322 (LTGATSFLGS…AGEVFLENLV (162 aa)). Residues 410–435 (VQQQQQQQQRQSQPPRDDAADGSPTE) are disordered. Residues 411–422 (QQQQQQQQRQSQ) show a composition bias toward low complexity. Residues 424-435 (PRDDAADGSPTE) show a composition bias toward basic and acidic residues.

The protein operates within mycotoxin biosynthesis. Its function is as follows. Polyketide synthase-related protein; part of the gene cluster that mediates the biosynthesis of 10,11-dehydrocurvularin, a prevalent fungal phytotoxin with heat shock response and immune-modulatory activities. The highly reducing polyketide synthase Dhc3 is responsible for biosynthesis up to the tetraketide stage. The non-reducing polyketide synthase Dhc5 then conducts four additional chain extension cycles, producing the unreduced part of the nascent octaketide from C-1 to C-8 in 10,11-dehydrocurvularin. The role of Dhc1 in 10,11-dehydrocurvularin biosynthesis has not been identified yet. This chain is Polyketide synthase-related protein Dhc1, found in Alternaria cinerariae.